We begin with the raw amino-acid sequence, 76 residues long: U-scoloptoxin(13)-Sm1a (76 aa).

An N-terminal signal peptide occupies residues 1-22 (MAYICAXTLAFLLCVNTGIIQA).

The protein belongs to the scoloptoxin-13 family. Post-translationally, contains 4 disulfide bonds. Expressed by the venom gland.

It localises to the secreted. This Scolopendra morsitans (Tanzanian blue ringleg centipede) protein is U-scoloptoxin(13)-Sm1a.